A 141-amino-acid chain; its full sequence is Large ribosomal subunit protein uL11 (141 aa).

It belongs to the universal ribosomal protein uL11 family. Part of the ribosomal stalk of the 50S ribosomal subunit. Interacts with L10 and the large rRNA to form the base of the stalk. L10 forms an elongated spine to which L12 dimers bind in a sequential fashion forming a multimeric L10(L12)X complex. One or more lysine residues are methylated.

Functionally, forms part of the ribosomal stalk which helps the ribosome interact with GTP-bound translation factors. This is Large ribosomal subunit protein uL11 from Campylobacter lari (strain RM2100 / D67 / ATCC BAA-1060).